A 642-amino-acid polypeptide reads, in one-letter code: UvrABC system protein C (642 aa).

Residues 20–97 (ERCGVYRMFD…IKKFQPKFNI (78 aa)) enclose the GIY-YIG domain. In terms of domain architecture, UVR spans 207–242 (KELQENLSKKMEELSSQMRFEEAAEIRDRIKALSYV).

Belongs to the UvrC family. Interacts with UvrB in an incision complex.

Its subcellular location is the cytoplasm. In terms of biological role, the UvrABC repair system catalyzes the recognition and processing of DNA lesions. UvrC both incises the 5' and 3' sides of the lesion. The N-terminal half is responsible for the 3' incision and the C-terminal half is responsible for the 5' incision. This is UvrABC system protein C from Rickettsia felis (strain ATCC VR-1525 / URRWXCal2) (Rickettsia azadi).